A 55-amino-acid polypeptide reads, in one-letter code: Chromatin protein Cren7 (55 aa).

It belongs to the Cren7 family. In terms of assembly, monomer. Methylated at multiple sites, to varying extents.

The protein resides in the chromosome. Its subcellular location is the cytoplasm. In terms of biological role, a chromatin protein, binds double-stranded DNA without sequence specificity. Constrains negative DNA supercoils. This is Chromatin protein Cren7 from Ignicoccus hospitalis (strain KIN4/I / DSM 18386 / JCM 14125).